Consider the following 28-residue polypeptide: Conotoxin de7b (28 aa).

3 cysteine pairs are disulfide-bonded: cysteine 2–cysteine 18, cysteine 9–cysteine 22, and cysteine 17–cysteine 27. Residue proline 4 is modified to 4-hydroxyproline; partial. Glutamate 7 is modified (4-carboxyglutamate; partial). The residue at position 14 (proline 14) is a 4-hydroxyproline; partial.

Expressed by the venom duct.

The protein resides in the secreted. Functionally, may inhibit sodium (Nav) or calcium channels (Cav). In Conasprella delessertii (Sozon's cone), this protein is Conotoxin de7b.